We begin with the raw amino-acid sequence, 207 residues long: Ribosomal RNA large subunit methyltransferase E (207 aa).

Gly-60, Trp-62, Asp-80, Asp-96, and Asp-121 together coordinate S-adenosyl-L-methionine. Lys-161 functions as the Proton acceptor in the catalytic mechanism.

It belongs to the class I-like SAM-binding methyltransferase superfamily. RNA methyltransferase RlmE family.

It is found in the cytoplasm. The enzyme catalyses uridine(2552) in 23S rRNA + S-adenosyl-L-methionine = 2'-O-methyluridine(2552) in 23S rRNA + S-adenosyl-L-homocysteine + H(+). Its function is as follows. Specifically methylates the uridine in position 2552 of 23S rRNA at the 2'-O position of the ribose in the fully assembled 50S ribosomal subunit. This Marinobacter nauticus (strain ATCC 700491 / DSM 11845 / VT8) (Marinobacter aquaeolei) protein is Ribosomal RNA large subunit methyltransferase E.